Consider the following 374-residue polypeptide: SKP1-interacting partner 15 (374 aa).

Residues 3–48 enclose the F-box domain; that stretch reads SSPVNCLPPDSLHQIFSSLPIRDIMICRSVCKFFNQLLTSQCFIEI.

Part of a SCF (ASK-cullin-F-box) protein ligase complex. Interacts with SKP1A/ASK1, SKP1B/ASK2, ASK11 and ASK13.

Its subcellular location is the nucleus. Its pathway is protein modification; protein ubiquitination. Component of SCF(ASK-cullin-F-box) E3 ubiquitin ligase complexes, which may mediate the ubiquitination and subsequent proteasomal degradation of target proteins. This chain is SKP1-interacting partner 15 (SKIP15), found in Arabidopsis thaliana (Mouse-ear cress).